The following is a 315-amino-acid chain: Hydrogenase-4 component C (315 aa).

Residues 1-10 (MRQTLCDGYL) lie on the Periplasmic side of the membrane. Residues 11-31 (VIFALAQAVILLMLTPLFTGI) form a helical membrane-spanning segment. Over 32-73 (SRQIRARMHSRRGPGIWQDYRDIHKLFKRQEVAPTSSGLMFR) the chain is Cytoplasmic. The helical transmembrane segment at 74 to 94 (LMPWVLISSMLVLAMALPLFI) threads the bilayer. Residues 95–98 (TVSP) lie on the Periplasmic side of the membrane. Residues 99 to 119 (FAGGGDLITLIYLLALFRFFF) form a helical membrane-spanning segment. Residues 120–140 (ALSGLDTGSPFAGVGASRELT) lie on the Cytoplasmic side of the membrane. The chain crosses the membrane as a helical span at residues 141 to 161 (LGILVEPMLILSLLVLALIAG). Residues 162-181 (STHIEMISNTLAMGWNSPLT) lie on the Periplasmic side of the membrane. Residues 182-202 (TVLALLACGFACFIEMGKIPF) traverse the membrane as a helical segment. Residues 203-228 (DVAEAEQELQEGPLTEYSGAGLALAK) are Cytoplasmic-facing. A helical membrane pass occupies residues 229 to 249 (WGLGLKQVVMASLFVALFLPF). Residues 250–256 (GRAQELS) are Periplasmic-facing. The chain crosses the membrane as a helical span at residues 257-277 (LACLLTSLVVTLLKVLLIFVL). Over 278–289 (ASIAENTLARGR) the chain is Cytoplasmic. Residues 290–310 (FLLIHHVTWLGFSLAALAWVF) traverse the membrane as a helical segment. The Periplasmic portion of the chain corresponds to 311-315 (WLTGL).

This sequence belongs to the complex I subunit 1 family.

The protein localises to the cell inner membrane. Possible component of hydrogenase 4. In Escherichia coli (strain K12), this protein is Hydrogenase-4 component C.